We begin with the raw amino-acid sequence, 465 residues long: MKPPILVFIVYLLQLRDCQCAPTGKDRTSIREDPKGFSKAGEIDVDEEVKKALIGMKQMKILMERREEEHSKLMRTLKKCREEKQEALKLMNEVQEHLEEEERLCQVSLMDSWDECKSCLESDCMRFYTTCQSSWSSMKSTIERVFRKIYQFLFPFHEDDEKELPVGEKFTEEDVQLMQIENVFSQLTVDVGFLYNMSFHVFKQMQQEFDLAFQSYFMSDTDSMEPYFFPAFSKEPAKKAHPMQSWDIPSFFQLFCNFSLSVYQSVSATVTEMLKATEDLSKQDKDSAHGGPSSTTWPVRGRGLCGEPGQNSSECLQFHARCQKCQDYLWADCPAVPELYTKADEALELVNISNQQYAQVLQMTQHHLEDTTYLMEKMREQFGWVTELASQTPGSENIFSFIKVVPGVHEGNFSKQDEKMIDISILPSSNFTLTIPLEESAESSDFISYMLAKAVQHFKEHFKSW.

An N-terminal signal peptide occupies residues 1-20; sequence MKPPILVFIVYLLQLRDCQC. Positions 62–107 form a coiled coil; that stretch reads LMERREEEHSKLMRTLKKCREEKQEALKLMNEVQEHLEEEERLCQV. Cystine bridges form between Cys-105–Cys-333, Cys-116–Cys-325, Cys-119–Cys-322, Cys-124–Cys-315, and Cys-131–Cys-305. Residues Asn-196 and Asn-257 are each glycosylated (N-linked (GlcNAc...) asparagine). Positions 280 to 300 are disordered; it reads LSKQDKDSAHGGPSSTTWPVR. Residues Asn-311, Asn-351, Asn-412, and Asn-430 are each glycosylated (N-linked (GlcNAc...) asparagine).

Belongs to the clusterin family.

Its subcellular location is the secreted. This is Clusterin-like protein 1 from Bos taurus (Bovine).